A 277-amino-acid chain; its full sequence is Protein CIMAP1D (277 aa).

3 STPGR repeats span residues 122 to 148 (PGPGAYSPEKAPPVRQRNAPAFTLGSR), 202 to 227 (PGPGQYESPDPNTYRQRRPAFSILGR), and 238 to 263 (PGPGTHNPEQVTVNRARAPAYTMGIR). The segment at 181–277 (PSYTVVGRTP…ASTMVGDTKC (97 aa)) is disordered.

The protein belongs to the CIMAP family.

This chain is Protein CIMAP1D (Cimap1d), found in Mus musculus (Mouse).